The sequence spans 310 residues: Ribosomal RNA small subunit methyltransferase H (310 aa).

Residues 40-42, Asp59, Phe89, Asp104, and Gln111 each bind S-adenosyl-L-methionine; that span reads GGH.

It belongs to the methyltransferase superfamily. RsmH family.

It localises to the cytoplasm. The enzyme catalyses cytidine(1402) in 16S rRNA + S-adenosyl-L-methionine = N(4)-methylcytidine(1402) in 16S rRNA + S-adenosyl-L-homocysteine + H(+). Specifically methylates the N4 position of cytidine in position 1402 (C1402) of 16S rRNA. In Amoebophilus asiaticus (strain 5a2), this protein is Ribosomal RNA small subunit methyltransferase H.